Consider the following 160-residue polypeptide: Major strawberry allergen Fra a 1.04 (160 aa).

This sequence belongs to the BetVI family. In terms of processing, phosphorylated in vivo. Phosphorylation prevents its activity as ribonuclease. In terms of tissue distribution, highly expressed in roots. Expressed a low levels in ripe red fruits.

Its function is as follows. Possesses ribonuclease activity in vitro. The chain is Major strawberry allergen Fra a 1.04 from Fragaria ananassa (Strawberry).